A 371-amino-acid chain; its full sequence is Glycosyltransferase 8 domain-containing protein 1 (371 aa).

Residues 1–5 (MSFRK) are Cytoplasmic-facing. A helical; Signal-anchor for type II membrane protein transmembrane segment spans residues 6–26 (VTIIIWALAVILFLLALHHNF). Residues 27-371 (LSLSSLLRND…RRHMDTSNIK (345 aa)) are Lumenal-facing. N-linked (GlcNAc...) asparagine glycosylation occurs at Asn-257.

This sequence belongs to the glycosyltransferase 8 family.

The protein localises to the membrane. This Rattus norvegicus (Rat) protein is Glycosyltransferase 8 domain-containing protein 1 (Glt8d1).